Consider the following 256-residue polypeptide: Protein TV0584 (256 aa).

It belongs to the CinA family.

The polypeptide is Protein TV0584 (Thermoplasma volcanium (strain ATCC 51530 / DSM 4299 / JCM 9571 / NBRC 15438 / GSS1)).